The following is a 153-amino-acid chain: Ribosome maturation factor RimP (153 aa).

The protein belongs to the RimP family.

Its subcellular location is the cytoplasm. Required for maturation of 30S ribosomal subunits. The polypeptide is Ribosome maturation factor RimP (Clostridium botulinum (strain 657 / Type Ba4)).